Consider the following 952-residue polypeptide: Protein translocase subunit SecA (952 aa).

Residues Gln-135, 153 to 157 (GEGKT), and Asp-575 each bind ATP. A compositionally biased stretch (basic and acidic residues) spans 614 to 624 (RHESRRIDNQL). Disordered stretches follow at residues 614-636 (RHES…DPGS) and 916-946 (VSAK…GKKY). Residues Cys-938, Cys-940, Cys-949, and Cys-950 each coordinate Zn(2+).

This sequence belongs to the SecA family. Monomer and homodimer. Part of the essential Sec protein translocation apparatus which comprises SecA, SecYEG and auxiliary proteins SecDF. Other proteins may also be involved. The cofactor is Zn(2+).

The protein localises to the cell membrane. The protein resides in the cytoplasm. It catalyses the reaction ATP + H2O + cellular proteinSide 1 = ADP + phosphate + cellular proteinSide 2.. Part of the Sec protein translocase complex. Interacts with the SecYEG preprotein conducting channel. Has a central role in coupling the hydrolysis of ATP to the transfer of proteins into and across the cell membrane, serving as an ATP-driven molecular motor driving the stepwise translocation of polypeptide chains across the membrane. This Dehalococcoides mccartyi (strain ATCC BAA-2100 / JCM 16839 / KCTC 5957 / BAV1) protein is Protein translocase subunit SecA.